The chain runs to 100 residues: Small ribosomal subunit protein uS14 (100 aa).

Belongs to the universal ribosomal protein uS14 family. In terms of assembly, part of the 30S ribosomal subunit. Contacts proteins S3 and S10.

Binds 16S rRNA, required for the assembly of 30S particles and may also be responsible for determining the conformation of the 16S rRNA at the A site. This chain is Small ribosomal subunit protein uS14, found in Gloeothece citriformis (strain PCC 7424) (Cyanothece sp. (strain PCC 7424)).